The sequence spans 33 residues: Pardaxin P-3 (33 aa).

This sequence belongs to the pardaxin family. In aqueous solution exists as a tetramer.

The protein localises to the secreted. Its subcellular location is the target cell membrane. Its function is as follows. Exhibits unusual shark repellent and surfactant properties. Forms voltage-dependent, ion-permeable channels in membranes. At high concentration causes cell membrane lysis. The sequence is that of Pardaxin P-3 from Pardachirus pavoninus (Peacock sole).